Reading from the N-terminus, the 445-residue chain is Glucose-6-phosphate isomerase (445 aa).

The active-site Proton donor is Glu287. Active-site residues include His308 and Lys422.

Belongs to the GPI family.

The protein resides in the cytoplasm. It catalyses the reaction alpha-D-glucose 6-phosphate = beta-D-fructose 6-phosphate. Its pathway is carbohydrate biosynthesis; gluconeogenesis. It participates in carbohydrate degradation; glycolysis; D-glyceraldehyde 3-phosphate and glycerone phosphate from D-glucose: step 2/4. Its function is as follows. Catalyzes the reversible isomerization of glucose-6-phosphate to fructose-6-phosphate. This Bacteroides thetaiotaomicron (strain ATCC 29148 / DSM 2079 / JCM 5827 / CCUG 10774 / NCTC 10582 / VPI-5482 / E50) protein is Glucose-6-phosphate isomerase.